We begin with the raw amino-acid sequence, 73 residues long: Disintegrin barbourin (73 aa).

The Disintegrin domain maps to 1 to 73 (EAGEECDCGS…ADCPRNGLYG (73 aa)). 6 disulfide bridges follow: C6-C21, C8-C16, C15-C38, C29-C35, C34-C59, and C47-C66. Residues 51 to 53 (KGD) carry the Cell attachment site; atypical (KGD) motif.

Belongs to the venom metalloproteinase (M12B) family. P-II subfamily. P-IIa sub-subfamily. As to quaternary structure, monomer. In terms of tissue distribution, expressed by the venom gland.

It is found in the secreted. In terms of biological role, inhibitor of ligand binding to the integrins alpha-IIb/beta-3 (ITGA2B/ITGB3). Competition with fibrinogen for the RGD recognition sites on the alpha-IIb/beta-3 integrin results in the inhibition of platelet aggregation induced by ADP, thrombin, platelet-activating factor and collagen. The protein is Disintegrin barbourin of Sistrurus miliarius barbouri (Dusky pigmy rattlesnake).